We begin with the raw amino-acid sequence, 452 residues long: 3-phosphoshikimate 1-carboxyvinyltransferase (452 aa).

Lys-24, Ser-25, and Arg-29 together coordinate 3-phosphoshikimate. Lys-24 is a phosphoenolpyruvate binding site. Phosphoenolpyruvate contacts are provided by Gly-95 and Arg-123. 3-phosphoshikimate-binding residues include Ser-167, Gln-169, Asp-319, and Lys-346. Position 169 (Gln-169) interacts with phosphoenolpyruvate. Asp-319 serves as the catalytic Proton acceptor. Arg-350 and Arg-394 together coordinate phosphoenolpyruvate.

This sequence belongs to the EPSP synthase family. As to quaternary structure, monomer.

Its subcellular location is the cytoplasm. It carries out the reaction 3-phosphoshikimate + phosphoenolpyruvate = 5-O-(1-carboxyvinyl)-3-phosphoshikimate + phosphate. It participates in metabolic intermediate biosynthesis; chorismate biosynthesis; chorismate from D-erythrose 4-phosphate and phosphoenolpyruvate: step 6/7. Catalyzes the transfer of the enolpyruvyl moiety of phosphoenolpyruvate (PEP) to the 5-hydroxyl of shikimate-3-phosphate (S3P) to produce enolpyruvyl shikimate-3-phosphate and inorganic phosphate. This chain is 3-phosphoshikimate 1-carboxyvinyltransferase, found in Phenylobacterium zucineum (strain HLK1).